Here is a 219-residue protein sequence, read N- to C-terminus: Vacuolar protein sorting-associated protein 20 homolog 1 (219 aa).

The stretch at 20 to 60 (SLKTQRRKLGQYQQKLEKVIEAEKQAARDLIREKRKDRALL) forms a coiled coil. The tract at residues 171-219 (PEVPTKESEESEKLDLPDVPTKTPVASNAEITPAESATKTKVLEEPLPA) is disordered. Over residues 174-186 (PTKESEESEKLDL) the composition is skewed to basic and acidic residues. Residues 194–209 (PVASNAEITPAESATK) show a composition bias toward polar residues.

Belongs to the SNF7 family. As to quaternary structure, component of the endosomal sorting required for transport complex III (ESCRT-III), composed at least of VPS2, VPS20, VPS24 and VPS32. Interacts with SKD1.

The protein localises to the endosome. Functionally, component of the ESCRT-III complex, which is required for multivesicular bodies (MVBs) formation and sorting of endosomal cargo proteins into MVBs. The ESCRT-III complex is probably involved in the concentration of MVB cargo. The sequence is that of Vacuolar protein sorting-associated protein 20 homolog 1 (VPS20.1) from Arabidopsis thaliana (Mouse-ear cress).